Reading from the N-terminus, the 457-residue chain is Multidrug resistance protein MdtK (457 aa).

The next 12 helical transmembrane spans lie at 11 to 31, 53 to 73, 93 to 113, 127 to 147, 160 to 180, 188 to 208, 243 to 263, 276 to 296, 316 to 336, 357 to 377, 387 to 407, and 416 to 436; these read LLAL…MGVV, IWLP…PIVA, WLAT…RFII, AIGF…YQVL, GMII…AFIY, LGGI…FLMM, LPVG…ALLV, IALN…IAAT, ITAL…SIIF, LMLF…GSGV, IFFI…YLLG, and MGPA…AIMM.

The protein belongs to the multi antimicrobial extrusion (MATE) (TC 2.A.66.1) family. MdtK subfamily.

The protein localises to the cell inner membrane. Multidrug efflux pump that functions probably as a Na(+)/drug antiporter. The polypeptide is Multidrug resistance protein MdtK (Proteus mirabilis (strain HI4320)).